Reading from the N-terminus, the 270-residue chain is Inositol monophosphatase (270 aa).

Glutamate 71, aspartate 91, leucine 93, and aspartate 94 together coordinate Mg(2+). Residue glutamate 71 coordinates substrate. Residues 93 to 96 (LDGT), 194 to 196 (GSC), glutamate 213, and aspartate 221 each bind substrate. Aspartate 221 lines the Mg(2+) pocket.

The protein belongs to the inositol monophosphatase superfamily. Mg(2+) serves as cofactor.

The catalysed reaction is a myo-inositol phosphate + H2O = myo-inositol + phosphate. The protein operates within polyol metabolism; myo-inositol biosynthesis; myo-inositol from D-glucose 6-phosphate: step 2/2. Its activity is regulated as follows. Inhibited by Li(+). Its function is as follows. Responsible for the provision of inositol required for synthesis of phosphatidylinositol and polyphosphoinositides. The sequence is that of Inositol monophosphatase (IMP1) from Mesembryanthemum crystallinum (Common ice plant).